We begin with the raw amino-acid sequence, 209 residues long: Thymidylate kinase (209 aa).

10-17 provides a ligand contact to ATP; it reads GLDGAGKS.

This sequence belongs to the thymidylate kinase family.

The enzyme catalyses dTMP + ATP = dTDP + ADP. In terms of biological role, phosphorylation of dTMP to form dTDP in both de novo and salvage pathways of dTTP synthesis. This is Thymidylate kinase from Francisella tularensis subsp. holarctica (strain FTNF002-00 / FTA).